We begin with the raw amino-acid sequence, 379 residues long: Queuine tRNA-ribosyltransferase (379 aa).

The active-site Proton acceptor is Asp-94. Residues 94–98 (DSGGF), Asp-148, Gln-191, and Gly-218 contribute to the substrate site. The interval 249-255 (GVGSPDS) is RNA binding. Residue Asp-268 is the Nucleophile of the active site. The RNA binding; important for wobble base 34 recognition stretch occupies residues 273–277 (TRIAR). Cys-306, Cys-308, Cys-311, and His-337 together coordinate Zn(2+).

Belongs to the queuine tRNA-ribosyltransferase family. As to quaternary structure, homodimer. Within each dimer, one monomer is responsible for RNA recognition and catalysis, while the other monomer binds to the replacement base PreQ1. It depends on Zn(2+) as a cofactor.

The catalysed reaction is 7-aminomethyl-7-carbaguanine + guanosine(34) in tRNA = 7-aminomethyl-7-carbaguanosine(34) in tRNA + guanine. Its pathway is tRNA modification; tRNA-queuosine biosynthesis. Functionally, catalyzes the base-exchange of a guanine (G) residue with the queuine precursor 7-aminomethyl-7-deazaguanine (PreQ1) at position 34 (anticodon wobble position) in tRNAs with GU(N) anticodons (tRNA-Asp, -Asn, -His and -Tyr). Catalysis occurs through a double-displacement mechanism. The nucleophile active site attacks the C1' of nucleotide 34 to detach the guanine base from the RNA, forming a covalent enzyme-RNA intermediate. The proton acceptor active site deprotonates the incoming PreQ1, allowing a nucleophilic attack on the C1' of the ribose to form the product. After dissociation, two additional enzymatic reactions on the tRNA convert PreQ1 to queuine (Q), resulting in the hypermodified nucleoside queuosine (7-(((4,5-cis-dihydroxy-2-cyclopenten-1-yl)amino)methyl)-7-deazaguanosine). The protein is Queuine tRNA-ribosyltransferase of Bacillus cereus (strain Q1).